We begin with the raw amino-acid sequence, 318 residues long: MSASDGNTAELWVPTGSVTVRVPGKVNLYLAVGDRREDGYHELTTVFHAVSLVDEVTVRNADVLSLELVGEGADQLPTDERNLAWQAAELMAEHVGRAPDVSIMIDKSIPVAGGMAGGSADAAAVLVAMNSLWELNVPRRDLRMLAARLGSDVPFALHGGTALGTGRGEELATVLSRNTFHWVLAFADSGLLTSAVYNELDRLREVGDPPRLGEPGPVLAALAAGDPDQLAPLLGNEMQAAAVSLDPALARALRAGVEAGALAGIVSGSGPTCAFLCTSASSAIDVGAQLSGAGVCRTVRVATGPVPGARVVSAPTEV.

Lysine 25 is a catalytic residue. An ATP-binding site is contributed by 110-120; sequence PVAGGMAGGSA. Residue aspartate 152 is part of the active site.

Belongs to the GHMP kinase family. IspE subfamily.

It carries out the reaction 4-CDP-2-C-methyl-D-erythritol + ATP = 4-CDP-2-C-methyl-D-erythritol 2-phosphate + ADP + H(+). It functions in the pathway isoprenoid biosynthesis; isopentenyl diphosphate biosynthesis via DXP pathway; isopentenyl diphosphate from 1-deoxy-D-xylulose 5-phosphate: step 3/6. Functionally, catalyzes the phosphorylation of the position 2 hydroxy group of 4-diphosphocytidyl-2C-methyl-D-erythritol. The polypeptide is 4-diphosphocytidyl-2-C-methyl-D-erythritol kinase (Mycobacterium tuberculosis (strain ATCC 25177 / H37Ra)).